Here is a 308-residue protein sequence, read N- to C-terminus: Maspardin (308 aa).

One can recognise an AB hydrolase-1 domain in the interval 87–159; the sequence is FCDGFRKLLD…NSFWLMPAFM (73 aa). The residue at position 304 (Ser-304) is a Phosphoserine.

This sequence belongs to the AB hydrolase superfamily. Interacts with CD4. Interacts with ALDH16A1.

Its subcellular location is the cytoplasm. In terms of biological role, may play a role as a negative regulatory factor in CD4-dependent T-cell activation. The polypeptide is Maspardin (SPG21) (Pongo abelii (Sumatran orangutan)).